The primary structure comprises 245 residues: Keratin-associated protein 10-12 (245 aa).

19 consecutive repeat copies span residues 36–40 (CCEPP), 41–45 (CCAPA), 62–66 (CCRVT), 84–88 (CCQQS), 94–98 (CCTSS), 104–108 (CCVPV), 109–113 (CCKTV), 114–118 (CCKPV), 119–123 (CCMPV), 124–128 (CCGPS), 131–135 (CCQQS), 141–145 (CCISS), 151–155 (CCVPV), 156–160 (CCKPI), 161–165 (CCVPV), 173–177 (CCQQS), 183–187 (CCTTS), 188–192 (CCRPS), and 214–218 (CCVPT). Positions 36-218 (CCEPPCCAPA…VPVPSCCVPT (183 aa)) are 19 X 5 AA repeats of C-C-X(3).

It belongs to the KRTAP type 10 family. As to quaternary structure, interacts with hair keratins. As to expression, restricted to a narrow region of the hair fiber cuticle, lying approximately 20 cell layers above the apex of the dermal papilla of the hair root; not detected in any other tissues.

Functionally, in the hair cortex, hair keratin intermediate filaments are embedded in an interfilamentous matrix, consisting of hair keratin-associated proteins (KRTAP), which are essential for the formation of a rigid and resistant hair shaft through their extensive disulfide bond cross-linking with abundant cysteine residues of hair keratins. The matrix proteins include the high-sulfur and high-glycine-tyrosine keratins. The chain is Keratin-associated protein 10-12 (KRTAP10-12) from Homo sapiens (Human).